The following is a 126-amino-acid chain: Holo-[acyl-carrier-protein] synthase (126 aa).

The Mg(2+) site is built by Asp9 and Glu58.

Belongs to the P-Pant transferase superfamily. AcpS family. It depends on Mg(2+) as a cofactor.

The protein localises to the cytoplasm. The enzyme catalyses apo-[ACP] + CoA = holo-[ACP] + adenosine 3',5'-bisphosphate + H(+). In terms of biological role, transfers the 4'-phosphopantetheine moiety from coenzyme A to a Ser of acyl-carrier-protein. The sequence is that of Holo-[acyl-carrier-protein] synthase from Yersinia enterocolitica serotype O:8 / biotype 1B (strain NCTC 13174 / 8081).